The chain runs to 613 residues: MAFKARSSRFSVKMVEDTGGSQDLINNSFSSFIEEKSKESKKNKGNVTISDRSSNPFHISRDMDYFLLREQEQNQAIAEREQKKILRVHQKMTYASKVSAKHTSLRRELQLEDEMEQQLLNAEAKEMNCFRENNDWKLAMTRERKREPETLNDYMEKRRSMFLLQYALAMKRNEIQRLEMLATREENRLERAEKFLEKDASLFDEFLRENDRNSVQAMRMAEKETKIKTEKIVEIRELTAQITSIKSEISKFEDTLKHYKIYKEFLYKLSPKEWLDEQQEKHLAFKRAKESSELTRNNSTAILFGDKGSGSKSKTAFLWKEVPGLKKVTKTGRLVKALSSSIQSLPQVGQLTQLSPHSELDSRLSSTMFPSQDDTDSDGEELALYFTEPQQLLDVFTKLEEENLSLIQNTQEMEETLDELNVTLKNTQIRMDKEVNLLKQWIASMMISISKEEESAAELELKARVFHFGEYQGDQQDTMLESLNHKVLEVYRKCVGMQQEANLGTVQMLTVVERQLDELLENLERVPQVKIEQAEKAKERERRMRLREEKAMMQKQLQEERLQRARARAQAKIKKKRGRKLISRSHPPVIKVKEVREQTLINKDKEEMLFFFT.

A disordered region spans residues 36–55; sequence KSKESKKNKGNVTISDRSSN. Positions 45–55 are enriched in polar residues; the sequence is GNVTISDRSSN. Coiled coils occupy residues 167-198, 233-260, 396-435, and 504-580; these read ALAM…FLEK, VEIR…KHYK, FTKL…DKEV, and GTVQ…RGRK.

It belongs to the CFAP100 family.

It localises to the cytoplasm. Its subcellular location is the cytoskeleton. The protein localises to the cilium axoneme. May play a role in ciliary/flagellar motility by regulating the assembly and the activity of axonemal inner dynein arm. The protein is Cilia- and flagella-associated protein 100 of Mus musculus (Mouse).